The sequence spans 132 residues: Small ribosomal subunit protein uS8 (132 aa).

Belongs to the universal ribosomal protein uS8 family. In terms of assembly, part of the 30S ribosomal subunit. Contacts proteins S5 and S12.

Functionally, one of the primary rRNA binding proteins, it binds directly to 16S rRNA central domain where it helps coordinate assembly of the platform of the 30S subunit. This chain is Small ribosomal subunit protein uS8, found in Streptococcus thermophilus (strain CNRZ 1066).